Here is a 100-residue protein sequence, read N- to C-terminus: Urease subunit gamma (100 aa).

Belongs to the urease gamma subunit family. Heterotrimer of UreA (gamma), UreB (beta) and UreC (alpha) subunits. Three heterotrimers associate to form the active enzyme.

It is found in the cytoplasm. It catalyses the reaction urea + 2 H2O + H(+) = hydrogencarbonate + 2 NH4(+). It functions in the pathway nitrogen metabolism; urea degradation; CO(2) and NH(3) from urea (urease route): step 1/1. In Tolumonas auensis (strain DSM 9187 / NBRC 110442 / TA 4), this protein is Urease subunit gamma.